Reading from the N-terminus, the 295-residue chain is Pyridoxal 5'-phosphate synthase subunit PdxS (295 aa).

Asp25 is a binding site for D-ribose 5-phosphate. Lys82 serves as the catalytic Schiff-base intermediate with D-ribose 5-phosphate. Gly154 is a D-ribose 5-phosphate binding site. Arg166 contacts D-glyceraldehyde 3-phosphate. Residues Gly215 and 236 to 237 (GS) contribute to the D-ribose 5-phosphate site.

The protein belongs to the PdxS/SNZ family. As to quaternary structure, in the presence of PdxT, forms a dodecamer of heterodimers.

The enzyme catalyses aldehydo-D-ribose 5-phosphate + D-glyceraldehyde 3-phosphate + L-glutamine = pyridoxal 5'-phosphate + L-glutamate + phosphate + 3 H2O + H(+). It participates in cofactor biosynthesis; pyridoxal 5'-phosphate biosynthesis. Its function is as follows. Catalyzes the formation of pyridoxal 5'-phosphate from ribose 5-phosphate (RBP), glyceraldehyde 3-phosphate (G3P) and ammonia. The ammonia is provided by the PdxT subunit. Can also use ribulose 5-phosphate and dihydroxyacetone phosphate as substrates, resulting from enzyme-catalyzed isomerization of RBP and G3P, respectively. The protein is Pyridoxal 5'-phosphate synthase subunit PdxS of Pasteurella multocida (strain Pm70).